A 222-amino-acid polypeptide reads, in one-letter code: UPF0488 protein C8orf33 homolog (222 aa).

Positions 1–16 (MAEPGRPAREAPAASS) are enriched in low complexity. 3 disordered regions span residues 1–103 (MAEP…AEQL), 119–146 (KTQR…TPLP), and 186–210 (VSEA…KTTP). Ala-2 bears the N-acetylalanine mark. Over residues 17 to 28 (RKTHRAPRRPRP) the composition is skewed to basic residues. Position 27 is an omega-N-methylarginine (Arg-27). The span at 29–39 (SRSASGASEPP) shows a compositional bias: low complexity. Ser-75 is subject to Phosphoserine. The span at 93 to 103 (PPSAEAQAEQL) shows a compositional bias: low complexity.

This sequence belongs to the UPF0488 family.

The protein is UPF0488 protein C8orf33 homolog of Mus musculus (Mouse).